Consider the following 353-residue polypeptide: Guanine nucleotide-binding protein subunit alpha (353 aa).

The disordered stretch occupies residues 1 to 21 (MGCGMSTEEKEGKARNEEIEN). Glycine 2 carries N-myristoyl glycine lipidation. The S-palmitoyl cysteine moiety is linked to residue cysteine 3. A compositionally biased stretch (basic and acidic residues) spans 7–21 (TEEKEGKARNEEIEN). One can recognise a G-alpha domain in the interval 32–353 (NEIKMLLLGA…QENLRLCGLI (322 aa)). The G1 motif stretch occupies residues 35-48 (KMLLLGAGESGKST). The GTP site is built by glutamate 43, serine 44, glycine 45, lysine 46, serine 47, threonine 48, aspartate 150, leucine 175, threonine 181, glycine 203, asparagine 269, lysine 270, aspartate 272, and alanine 325. Serine 47 lines the Mg(2+) pocket. The interval 173 to 181 (DVLRSRVKT) is G2 motif. Threonine 181 lines the Mg(2+) pocket. The tract at residues 196 to 205 (YRMFDVGGQR) is G3 motif. The G4 motif stretch occupies residues 265–272 (ILFLNKID). The G5 motif stretch occupies residues 323 to 328 (TCATDT).

The protein belongs to the G-alpha family. G(q) subfamily. G proteins are composed of 3 units; alpha, beta and gamma. The alpha chain contains the guanine nucleotide binding site. Requires Mg(2+) as cofactor.

Its function is as follows. Guanine nucleotide-binding proteins (G proteins) are involved as modulators or transducers in various transmembrane signaling systems. Plays a role in pathogenicity, specifically in appressorium formation in rice blast disease. Also involved in mating. The protein is Guanine nucleotide-binding protein subunit alpha (MAGB) of Pyricularia oryzae (strain 70-15 / ATCC MYA-4617 / FGSC 8958) (Rice blast fungus).